The following is a 719-amino-acid chain: Phosphoribosylformylglycinamidine synthase subunit PurL (719 aa).

H47 is an active-site residue. The ATP site is built by Y50 and K89. E91 serves as a coordination point for Mg(2+). Substrate is bound by residues S92–H95 and R114. The active-site Proton acceptor is H93. Residue D115 coordinates Mg(2+). Q238 is a substrate binding site. Position 266 (D266) interacts with Mg(2+). Residue E310–Q312 coordinates substrate. The ATP site is built by D488 and G525. Position 526 (N526) interacts with Mg(2+). Residue S528 participates in substrate binding.

This sequence belongs to the FGAMS family. As to quaternary structure, monomer. Part of the FGAM synthase complex composed of 1 PurL, 1 PurQ and 2 PurS subunits.

It localises to the cytoplasm. It carries out the reaction N(2)-formyl-N(1)-(5-phospho-beta-D-ribosyl)glycinamide + L-glutamine + ATP + H2O = 2-formamido-N(1)-(5-O-phospho-beta-D-ribosyl)acetamidine + L-glutamate + ADP + phosphate + H(+). Its pathway is purine metabolism; IMP biosynthesis via de novo pathway; 5-amino-1-(5-phospho-D-ribosyl)imidazole from N(2)-formyl-N(1)-(5-phospho-D-ribosyl)glycinamide: step 1/2. Part of the phosphoribosylformylglycinamidine synthase complex involved in the purines biosynthetic pathway. Catalyzes the ATP-dependent conversion of formylglycinamide ribonucleotide (FGAR) and glutamine to yield formylglycinamidine ribonucleotide (FGAM) and glutamate. The FGAM synthase complex is composed of three subunits. PurQ produces an ammonia molecule by converting glutamine to glutamate. PurL transfers the ammonia molecule to FGAR to form FGAM in an ATP-dependent manner. PurS interacts with PurQ and PurL and is thought to assist in the transfer of the ammonia molecule from PurQ to PurL. This chain is Phosphoribosylformylglycinamidine synthase subunit PurL, found in Cereibacter sphaeroides (strain ATCC 17025 / ATH 2.4.3) (Rhodobacter sphaeroides).